The sequence spans 222 residues: Embryonic stem cell-related gene protein (222 aa).

In terms of tissue distribution, expressed only in fetal ovary and in undifferentiated ES cells.

Its subcellular location is the nucleus. This chain is Embryonic stem cell-related gene protein (ESRG), found in Homo sapiens (Human).